Reading from the N-terminus, the 161-residue chain is Cytochrome c-type biogenesis protein CcmE (161 aa).

Residues 1–8 (MNPRRKKR) are Cytoplasmic-facing. The helical; Signal-anchor for type II membrane protein transmembrane segment at 9-29 (LGIVLAIFIGISATIGLMLYA) threads the bilayer. At 30–161 (LNQNMDLFYT…SSEQKQGSGE (132 aa)) the chain is on the periplasmic side. Residues His129 and Tyr133 each coordinate heme. Residues 142 to 161 (MKKTHEPLQYSSEQKQGSGE) form a disordered region. Polar residues predominate over residues 150–161 (QYSSEQKQGSGE).

It belongs to the CcmE/CycJ family.

Its subcellular location is the cell inner membrane. Heme chaperone required for the biogenesis of c-type cytochromes. Transiently binds heme delivered by CcmC and transfers the heme to apo-cytochromes in a process facilitated by CcmF and CcmH. This Vibrio parahaemolyticus serotype O3:K6 (strain RIMD 2210633) protein is Cytochrome c-type biogenesis protein CcmE.